The chain runs to 532 residues: Nectin-4 (532 aa).

A signal peptide spans M1–C30. One can recognise an Ig-like V-type domain in the interval G31–K142. Residues G31 to L344 lie on the Extracellular side of the membrane. Intrachain disulfides connect C51–C125, C169–C221, and C266–C312. Ig-like C2-type domains follow at residues P146 to T235 and A244 to S328. The tract at residues G152–L179 is disordered. N-linked (GlcNAc...) asparagine glycans are attached at residues N189 and N282. A helical transmembrane segment spans residues G345–V365. At N366–V532 the chain is on the cytoplasmic side. The interval Q453–M491 is disordered. A compositionally biased stretch (acidic residues) spans P461 to Q474.

It belongs to the nectin family.

The protein resides in the cell membrane. Its function is as follows. May be involved in cell adhesion. The polypeptide is Nectin-4 (Xenopus tropicalis (Western clawed frog)).